Consider the following 75-residue polypeptide: RNA-binding protein KhpA (75 aa).

Positions 29-75 (SIILELKVSPEDMGKVIGKQGRIAKAIRTVVKAAAIKENKKVVVEII) constitute a KH domain.

This sequence belongs to the KhpA RNA-binding protein family. Forms a complex with KhpB.

It localises to the cytoplasm. A probable RNA chaperone. Forms a complex with KhpB which binds to cellular RNA and controls its expression. Plays a role in peptidoglycan (PG) homeostasis and cell length regulation. This is RNA-binding protein KhpA from Clostridium perfringens (strain 13 / Type A).